Reading from the N-terminus, the 704-residue chain is Elongation factor G (704 aa).

Residues A8–V290 enclose the tr-type G domain. Residues A17–T24, D88–H92, and N142–D145 contribute to the GTP site.

This sequence belongs to the TRAFAC class translation factor GTPase superfamily. Classic translation factor GTPase family. EF-G/EF-2 subfamily.

Its subcellular location is the cytoplasm. Its function is as follows. Catalyzes the GTP-dependent ribosomal translocation step during translation elongation. During this step, the ribosome changes from the pre-translocational (PRE) to the post-translocational (POST) state as the newly formed A-site-bound peptidyl-tRNA and P-site-bound deacylated tRNA move to the P and E sites, respectively. Catalyzes the coordinated movement of the two tRNA molecules, the mRNA and conformational changes in the ribosome. The sequence is that of Elongation factor G from Pectobacterium carotovorum subsp. carotovorum (strain PC1).